Reading from the N-terminus, the 152-residue chain is Small ribosomal subunit protein uS19 (152 aa).

Belongs to the universal ribosomal protein uS19 family.

Its function is as follows. Protein S19 forms a complex with S13 that binds strongly to the 16S ribosomal RNA. This is Small ribosomal subunit protein uS19 (rps19) from Methanocaldococcus jannaschii (strain ATCC 43067 / DSM 2661 / JAL-1 / JCM 10045 / NBRC 100440) (Methanococcus jannaschii).